A 234-amino-acid polypeptide reads, in one-letter code: Purine nucleoside phosphorylase DeoD-type (234 aa).

Histidine 5 contacts a purine D-ribonucleoside. Phosphate-binding positions include glycine 21, arginine 25, arginine 44, and 88–91; that span reads RVGT. A purine D-ribonucleoside-binding positions include 178–180 and 202–203; these read EME and SD. The Proton donor role is filled by aspartate 203.

Belongs to the PNP/UDP phosphorylase family. As to quaternary structure, homohexamer; trimer of homodimers.

The enzyme catalyses a purine D-ribonucleoside + phosphate = a purine nucleobase + alpha-D-ribose 1-phosphate. The catalysed reaction is a purine 2'-deoxy-D-ribonucleoside + phosphate = a purine nucleobase + 2-deoxy-alpha-D-ribose 1-phosphate. In terms of biological role, catalyzes the reversible phosphorolytic breakdown of the N-glycosidic bond in the beta-(deoxy)ribonucleoside molecules, with the formation of the corresponding free purine bases and pentose-1-phosphate. This Lactococcus lactis subsp. cremoris (strain MG1363) protein is Purine nucleoside phosphorylase DeoD-type.